The following is a 119-amino-acid chain: Large ribosomal subunit protein uL22 (119 aa).

This sequence belongs to the universal ribosomal protein uL22 family. As to quaternary structure, part of the 50S ribosomal subunit.

Functionally, this protein binds specifically to 23S rRNA; its binding is stimulated by other ribosomal proteins, e.g. L4, L17, and L20. It is important during the early stages of 50S assembly. It makes multiple contacts with different domains of the 23S rRNA in the assembled 50S subunit and ribosome. Its function is as follows. The globular domain of the protein is located near the polypeptide exit tunnel on the outside of the subunit, while an extended beta-hairpin is found that lines the wall of the exit tunnel in the center of the 70S ribosome. The chain is Large ribosomal subunit protein uL22 from Trichodesmium erythraeum (strain IMS101).